A 252-amino-acid polypeptide reads, in one-letter code: Secreted LysM effector LysM1 (252 aa).

Residues 20-64 (FAIPGDPGDTCDTLSDRWGITIDIFKSLNPGVNCPNLVANMEYCV) form the LysM 1 domain. The segment at 71-98 (DTPSTTTTAKPTMTPTSTPTKTTTTSTA) is disordered. The span at 72-98 (TPSTTTTAKPTMTPTSTPTKTTTTSTA) shows a compositional bias: low complexity. LysM domains lie at 126 to 172 (KFHL…YVCV) and 204 to 250 (KFHL…YVCI).

Belongs to the secreted LysM effector family.

Its subcellular location is the secreted. The protein localises to the cell wall. Its function is as follows. Secreted effector that binds two substrates, chitin and N-linked oligosaccharides associated with human skin glycoproteins. Could provide the pathogen with three important functions including shielding host cell wall chitin from the human immune system, shielding the pathogen's glycoproteins from host degradation and immune surveillance, and helping facilitate pathogen adhesion to human skin. In Trichophyton rubrum (strain ATCC MYA-4607 / CBS 118892) (Athlete's foot fungus), this protein is Secreted LysM effector LysM1.